A 399-amino-acid polypeptide reads, in one-letter code: uncharacterized protein (399 aa).

WD repeat units lie at residues 59–99, 102–141, 144–185, 187–227, 241–280, 283–322, 324–363, and 366–399; these read EHKD…QICQ, GHKD…EFIT, ETVD…QVMY, HTAP…PECR, ETAA…ILAS, AQTE…FRKS, PHEQ…LLGE, and GHQE…DCEH.

It is found in the cytoplasm. The protein resides in the nucleus. This is an uncharacterized protein from Schizosaccharomyces pombe (strain 972 / ATCC 24843) (Fission yeast).